The primary structure comprises 659 residues: tRNA uridine 5-carboxymethylaminomethyl modification enzyme MnmG (659 aa).

Residue 13 to 18 coordinates FAD; sequence GGGHAG. 281 to 295 contributes to the NAD(+) binding site; sequence GPRYCPSVEDKINRF.

The protein belongs to the MnmG family. Homodimer. Heterotetramer of two MnmE and two MnmG subunits. Requires FAD as cofactor.

It is found in the cytoplasm. Its function is as follows. NAD-binding protein involved in the addition of a carboxymethylaminomethyl (cmnm) group at the wobble position (U34) of certain tRNAs, forming tRNA-cmnm(5)s(2)U34. The sequence is that of tRNA uridine 5-carboxymethylaminomethyl modification enzyme MnmG from Delftia acidovorans (strain DSM 14801 / SPH-1).